A 176-amino-acid polypeptide reads, in one-letter code: ATP synthase subunit b, chloroplastic (176 aa).

A helical transmembrane segment spans residues 27–49 (ILNLAAVFALLAYVGTDFVSSLL).

This sequence belongs to the ATPase B chain family. As to quaternary structure, F-type ATPases have 2 components, F(1) - the catalytic core - and F(0) - the membrane proton channel. F(1) has five subunits: alpha(3), beta(3), gamma(1), delta(1), epsilon(1). F(0) has four main subunits: a(1), b(1), b'(1) and c(10-14). The alpha and beta chains form an alternating ring which encloses part of the gamma chain. F(1) is attached to F(0) by a central stalk formed by the gamma and epsilon chains, while a peripheral stalk is formed by the delta, b and b' chains.

Its subcellular location is the plastid. It localises to the chloroplast thylakoid membrane. Functionally, f(1)F(0) ATP synthase produces ATP from ADP in the presence of a proton or sodium gradient. F-type ATPases consist of two structural domains, F(1) containing the extramembraneous catalytic core and F(0) containing the membrane proton channel, linked together by a central stalk and a peripheral stalk. During catalysis, ATP synthesis in the catalytic domain of F(1) is coupled via a rotary mechanism of the central stalk subunits to proton translocation. In terms of biological role, component of the F(0) channel, it forms part of the peripheral stalk, linking F(1) to F(0). The protein is ATP synthase subunit b, chloroplastic of Nephroselmis olivacea (Green alga).